The chain runs to 29 residues: MKTKFVFDLLAPDDILHPSNHVNLIIRLI.

Belongs to the coronaviruses ns4.9 protein family.

The chain is Truncated non-structural protein of 4.9 kDa from Bovine coronavirus (strain Ontario) (BCoV).